Reading from the N-terminus, the 314-residue chain is MGEFGEVTLGVAQAAPVYFDREASTEKARGLIREAGEKGVDLLAFGETWLTGYPYWKDAPWSREYNDLRARYVANGVMIPGPETDALCQAAAEAGVDVAIGVVELEPGSLSSVYCTLLFISREGEILGRHRKLKPTDSERRYWSEGDATGLRVYERPYGRLSGLNCWEHLMMLPGYALAAQGTQFHVAAWPNMASSASELLSRAYAYQAGCYVLCAGGLGPAPGELPDGIAAESLDHLTGESCIIDPWGKVIAGPVSCEETLITARVSTASIYRRKSLTDVGGHYSRPDVFRFEVDRSERPRVVFRDGDVDDRG.

A CN hydrolase domain is found at 7-269 (VTLGVAQAAP…ETLITARVST (263 aa)). The Proton acceptor role is filled by Glu47. Residue Lys132 is the Proton donor of the active site. The Nucleophile role is filled by Cys166.

Belongs to the carbon-nitrogen hydrolase superfamily. Nitrilase family.

The catalysed reaction is a nitrile + 2 H2O = a carboxylate + NH4(+). Its function is as follows. Nitrilases catalyze the mild hydrolytic conversion of organonitriles directly to the corresponding carboxylic acids. Catalyzes the production of aryllactic acid derivatives. Mediates the hydrolysis of cyanohydrin to (S)-phenyllactic acid. This is Nitrilase 2 from Unknown prokaryotic organism.